The chain runs to 119 residues: Large ribosomal subunit protein uL18 (119 aa).

It belongs to the universal ribosomal protein uL18 family. In terms of assembly, part of the 50S ribosomal subunit; part of the 5S rRNA/L5/L18/L25 subcomplex. Contacts the 5S and 23S rRNAs.

Functionally, this is one of the proteins that bind and probably mediate the attachment of the 5S RNA into the large ribosomal subunit, where it forms part of the central protuberance. The protein is Large ribosomal subunit protein uL18 of Sorangium cellulosum (strain So ce56) (Polyangium cellulosum (strain So ce56)).